Reading from the N-terminus, the 704-residue chain is MIKLILSIILIICFIINSIESFKMITLTTGPPSDLGWNNMINLGRIGVTKAMDIEDSRLFVVSGRNDTYELLLPIIQNDDIDLVICSSLDHGDACKEIAAMYVNSTEIKTQFLVRGSGATTKNLIQFTYNYASVNYLSGMFAGLQTKTNKIGFISPGITAGASDCFVYAFWLGAKSVNPNIKFYYYNIGSYLDKDKTKGAAENLIDVYDCDVIGDTLDDFTASNVAISRGRYAIGTNGFPQRDVYGENVVYTYAYNWTKYFVPIASAVKNKIPPSKWYADFNKDNNLSLYDLSFGFQVSAETKFKIINQTKSFASYVRTLHPYFCNEYMEGYTQKYNLTRQPNTTNCITTTGFIGIDAPVGDMNYLGNYTIKFSKVEFQRSIQIGFSIVSGLLIGFVILMMIGIVKYQDTPSIRSASPSFLNLTLLGGVIIFIGIIVWVAPISTHQCNARFWLVTIGFSTLIGSLVVKNIRIWLIFDNPELKIRTITNNQLYPWVGLCLVINIVLMSIITTVGDLKAIEAQGIDSLGKFEYMTICKMNYTGAATLYSILAYFGTLLLVGVFVSWKIRIVHIEEFSECTAIAKTLYSISFCLFVIVPLMISPQDKQSETIILCVTGIFITTGALLIFFLPKFWRIFGNEKQGSHEHFTQRKQSAVASARAESANRNNSSNSFGFSKSSAQIGNTISGIESLNDDSNESSLSNETK.

The N-terminal stretch at 1–21 is a signal peptide; sequence MIKLILSIILIICFIINSIES. At 22–383 the chain is on the extracellular side; sequence FKMITLTTGP…SKVEFQRSIQ (362 aa). N-linked (GlcNAc...) asparagine glycosylation is found at Asn66, Asn104, Asn256, Asn286, Asn308, Asn337, Asn343, and Asn368. The helical transmembrane segment at 384–404 threads the bilayer; sequence IGFSIVSGLLIGFVILMMIGI. The Cytoplasmic portion of the chain corresponds to 405–419; the sequence is VKYQDTPSIRSASPS. Residues 420-440 traverse the membrane as a helical segment; that stretch reads FLNLTLLGGVIIFIGIIVWVA. At 441–455 the chain is on the extracellular side; the sequence is PISTHQCNARFWLVT. A helical membrane pass occupies residues 456–476; sequence IGFSTLIGSLVVKNIRIWLIF. Residues 477–492 lie on the Cytoplasmic side of the membrane; it reads DNPELKIRTITNNQLY. The helical transmembrane segment at 493-513 threads the bilayer; it reads PWVGLCLVINIVLMSIITTVG. Over 514–541 the chain is Extracellular; that stretch reads DLKAIEAQGIDSLGKFEYMTICKMNYTG. An N-linked (GlcNAc...) asparagine glycan is attached at Asn538. A helical transmembrane segment spans residues 542–562; the sequence is AATLYSILAYFGTLLLVGVFV. Residues 563 to 578 lie on the Cytoplasmic side of the membrane; that stretch reads SWKIRIVHIEEFSECT. A helical membrane pass occupies residues 579-599; the sequence is AIAKTLYSISFCLFVIVPLMI. Residues 600–608 are Extracellular-facing; sequence SPQDKQSET. The helical transmembrane segment at 609–629 threads the bilayer; that stretch reads IILCVTGIFITTGALLIFFLP. Topologically, residues 630 to 704 are cytoplasmic; that stretch reads KFWRIFGNEK…NESSLSNETK (75 aa). Disordered regions lie at residues 657–677 and 685–704; these read ARAE…SKSS and SGIE…NETK.

This sequence in the N-terminal section; belongs to the BMP lipoprotein family. In the C-terminal section; belongs to the G-protein coupled receptor 3 family. GABA-B receptor subfamily.

It localises to the membrane. This chain is Metabotropic glutamate receptor-like protein K (grlK), found in Dictyostelium discoideum (Social amoeba).